Here is a 585-residue protein sequence, read N- to C-terminus: Staphyloferrin A synthase (585 aa).

Belongs to the IucA/IucC family.

The enzyme catalyses N(5)-[(S)-citryl]-D-ornithine + citrate + ATP = staphyloferrin A + AMP + diphosphate + H(+). It functions in the pathway siderophore biosynthesis. Its function is as follows. Involved in the biosynthesis of the siderophore staphyloferrin A. Catalyzes the ATP-dependent condensation of a citryl-D-ornithine intermediate, produced by SfnaD, and citrate to form staphyloferrin A. The sequence is that of Staphyloferrin A synthase from Staphylococcus aureus (strain NCTC 8325 / PS 47).